Consider the following 245-residue polypeptide: Protein mlo1 (245 aa).

Residues 4-38 (YKSLKVAELREKLAEKGLSTAGNKAELVSRLTAAT) form the SAP domain. Residues 32 to 245 (SRLTAATESN…AERFGVAAKN (214 aa)) are disordered. The segment covering 37-52 (ATESNDENTSNNNATD) has biased composition (low complexity). Residues 58 to 70 (PPEDDIDWGDMEN) are compositionally biased toward acidic residues. Residues 109–118 (TSQAPETSTG) are compositionally biased toward polar residues. The span at 119–130 (AEEHQETTEESK) shows a compositional bias: basic and acidic residues. Ser-139 carries the phosphoserine modification. A compositionally biased stretch (low complexity) spans 182 to 196 (SSNNKNHNQSKNPQN).

The protein belongs to the SAP domain-containing ribonucleoprotein family.

This is Protein mlo1 (mlo1) from Schizosaccharomyces pombe (strain 972 / ATCC 24843) (Fission yeast).